The sequence spans 232 residues: Endonuclease NucS (232 aa).

This sequence belongs to the NucS endonuclease family.

Its subcellular location is the cytoplasm. Its function is as follows. Cleaves both 3' and 5' ssDNA extremities of branched DNA structures. The chain is Endonuclease NucS from Mycobacteroides abscessus (strain ATCC 19977 / DSM 44196 / CCUG 20993 / CIP 104536 / JCM 13569 / NCTC 13031 / TMC 1543 / L948) (Mycobacterium abscessus).